Consider the following 100-residue polypeptide: Pancreatic polypeptide prohormone (100 aa).

Positions 1-29 (MAVAYCCLSLFLVSTWVALLLQPLQGTWG) are cleaved as a signal peptide. Tyr65 is modified (tyrosine amide).

Belongs to the NPY family. Post-translationally, no icosapeptide-like peptide is cleaved from the C-terminal.

It is found in the secreted. Functionally, hormone secreted by pancreatic cells that acts as a regulator of pancreatic and gastrointestinal functions probably by signaling through the G protein-coupled receptor NPY4R2. The protein is Pancreatic polypeptide prohormone (Ppy) of Mus musculus (Mouse).